A 348-amino-acid chain; its full sequence is Phosphoribosylformylglycinamidine cyclo-ligase (348 aa).

The protein belongs to the AIR synthase family.

The protein localises to the cytoplasm. It carries out the reaction 2-formamido-N(1)-(5-O-phospho-beta-D-ribosyl)acetamidine + ATP = 5-amino-1-(5-phospho-beta-D-ribosyl)imidazole + ADP + phosphate + H(+). The protein operates within purine metabolism; IMP biosynthesis via de novo pathway; 5-amino-1-(5-phospho-D-ribosyl)imidazole from N(2)-formyl-N(1)-(5-phospho-D-ribosyl)glycinamide: step 2/2. The polypeptide is Phosphoribosylformylglycinamidine cyclo-ligase (Roseobacter denitrificans (strain ATCC 33942 / OCh 114) (Erythrobacter sp. (strain OCh 114))).